We begin with the raw amino-acid sequence, 418 residues long: Tyrosine--tRNA ligase (418 aa).

Tyr-38 is a binding site for L-tyrosine. Positions 43–52 match the 'HIGH' region motif; that stretch reads CTAKSLHVGS. Residues Tyr-175 and Gln-179 each contribute to the L-tyrosine site. The short motif at 235-239 is the 'KMSKS' region element; the sequence is KMGKT. Lys-238 is an ATP binding site. An S4 RNA-binding domain is found at 348–413; the sequence is LPIIKLLQMC…CGKKRHLKVM (66 aa).

It belongs to the class-I aminoacyl-tRNA synthetase family. TyrS type 1 subfamily. Homodimer.

It is found in the cytoplasm. It carries out the reaction tRNA(Tyr) + L-tyrosine + ATP = L-tyrosyl-tRNA(Tyr) + AMP + diphosphate + H(+). Catalyzes the attachment of tyrosine to tRNA(Tyr) in a two-step reaction: tyrosine is first activated by ATP to form Tyr-AMP and then transferred to the acceptor end of tRNA(Tyr). The chain is Tyrosine--tRNA ligase from Ehrlichia chaffeensis (strain ATCC CRL-10679 / Arkansas).